Consider the following 570-residue polypeptide: MIPPEIRRSVLLQKAIKLALAGTLLTFASFSATAADPSSDTETPQPPDILLGPLFNDVQNAKLFPDQKTFADAIPNSDPLMILADYRMQRNQSGFDLRHFVDVNFTLPKAGEKYVPPAGQSLREHIDGLWPVLTRSTKNVEKWDSLLPLPESYVVPGGRFREIYYWDSYFTMLGLAESEHWDKVADMVANFGYEIDAWGHIPNGNRTYYLSRSQPPFFAFMVELLAQHEGDDALKEYLPQLQKEYAYWMEGVETLQPGQQNQRVVKLEDGSVLNRYWDDRDTPRPESWVEDIATAKSNPNRPATEIYRDLRSAAASGWDFSSRWMDNPQQLSTIRTTTIVPVDLNALLYQLEKTLARASAAAGDRAEASQYDALANARQKAIEMHLWNNKEGWYADYDLKNNKIRDQLTAAALFPLYVNAAAKDRAAKVAAAAQAHLLQPGGLATTSVKSGQQWDAPNGWAPLQWVAAEGLQNYGQDDVAMEVTWRFLTNVQHTYDREKKLVEKYDVSSTGTGGGGGEYPLQDGFGWTNGVTLKMLDLICPQEKPCDSVPSTRPASLSATPTKTPSAATQ.

A signal peptide spans M1–A34. Substrate contacts are provided by residues R159, W166–D167, N203, R212–Q214, R284–E286, and G317. Catalysis depends on proton donor/acceptor residues D319 and E503. A substrate-binding site is contributed by E518. The disordered stretch occupies residues K544–Q570. Low complexity predominate over residues P554–Q570.

Belongs to the glycosyl hydrolase 37 family. As to quaternary structure, monomer.

It is found in the periplasm. It catalyses the reaction alpha,alpha-trehalose + H2O = alpha-D-glucose + beta-D-glucose. Functionally, provides the cells with the ability to utilize trehalose at high osmolarity by splitting it into glucose molecules that can subsequently be taken up by the phosphotransferase-mediated uptake system. This is Periplasmic trehalase from Salmonella newport (strain SL254).